A 374-amino-acid polypeptide reads, in one-letter code: Pectate lyase 2 (374 aa).

An N-terminal signal peptide occupies residues 1 to 22; the sequence is MKYLLPTAATGLLLLAAQPAVA. An intrachain disulfide couples Cys-93 to Cys-176. Asp-150, Asp-152, Glu-187, and Asp-191 together coordinate Ca(2+). Arg-239 is a catalytic residue. Cys-350 and Cys-373 form a disulfide bridge.

Belongs to the polysaccharide lyase 1 family. PLADES subfamily. It depends on Ca(2+) as a cofactor.

Its subcellular location is the secreted. It carries out the reaction Eliminative cleavage of (1-&gt;4)-alpha-D-galacturonan to give oligosaccharides with 4-deoxy-alpha-D-galact-4-enuronosyl groups at their non-reducing ends.. It functions in the pathway glycan metabolism; pectin degradation; 2-dehydro-3-deoxy-D-gluconate from pectin: step 2/5. Functionally, involved in maceration and soft-rotting of plant tissue. This chain is Pectate lyase 2 (pel2), found in Pectobacterium atrosepticum (strain SCRI 1043 / ATCC BAA-672) (Erwinia carotovora subsp. atroseptica).